We begin with the raw amino-acid sequence, 72 residues long: Translation initiation factor IF-1 2 (72 aa).

One can recognise an S1-like domain in the interval 1–72 (MAKDDVIQMQ…SRARIVFRTK (72 aa)).

The protein belongs to the IF-1 family. In terms of assembly, component of the 30S ribosomal translation pre-initiation complex which assembles on the 30S ribosome in the order IF-2 and IF-3, IF-1 and N-formylmethionyl-tRNA(fMet); mRNA recruitment can occur at any time during PIC assembly.

It is found in the cytoplasm. Its function is as follows. One of the essential components for the initiation of protein synthesis. Stabilizes the binding of IF-2 and IF-3 on the 30S subunit to which N-formylmethionyl-tRNA(fMet) subsequently binds. Helps modulate mRNA selection, yielding the 30S pre-initiation complex (PIC). Upon addition of the 50S ribosomal subunit IF-1, IF-2 and IF-3 are released leaving the mature 70S translation initiation complex. The polypeptide is Translation initiation factor IF-1 2 (Cupriavidus necator (strain ATCC 17699 / DSM 428 / KCTC 22496 / NCIMB 10442 / H16 / Stanier 337) (Ralstonia eutropha)).